We begin with the raw amino-acid sequence, 174 residues long: Urease accessory protein UreE (174 aa).

It belongs to the UreE family.

The protein resides in the cytoplasm. In terms of biological role, involved in urease metallocenter assembly. Binds nickel. Probably functions as a nickel donor during metallocenter assembly. In Helicobacter hepaticus (strain ATCC 51449 / 3B1), this protein is Urease accessory protein UreE.